The following is a 1624-amino-acid chain: Latent-transforming growth factor beta-binding protein 4 (1624 aa).

The N-terminal stretch at 1–27 is a signal peptide; sequence MPRPGTSGRRPLLLVLLLPLFAAATSA. Positions 125 to 146 are disordered; the sequence is RRPRGPGGRGLLRRRPPQRAPA. An EGF-like 1 domain is found at 149-181; sequence APVLCPLICHNGGVCVKPDRCLCPPDFAGKFCQ. 6 disulfides stabilise this stretch: Cys-153–Cys-163, Cys-157–Cys-169, Cys-171–Cys-180, Cys-289–Cys-311, Cys-298–Cys-324, and Cys-312–Cys-327. A TB 1 domain is found at 287 to 339; sequence GYCFRELRGGECASPLPGLRTQEVCCRGAGLAWGVHDCQLCSERLGNSERVSA. A glycan (N-linked (GlcNAc...) asparagine) is linked at Asn-352. Positions 357-397 constitute an EGF-like 2; calcium-binding domain; it reads DVDECATGGRCQHGECANTRGGYTCVCPDGFLLDSSRSSCI. 7 cysteine pairs are disulfide-bonded: Cys-361–Cys-372, Cys-367–Cys-381, Cys-383–Cys-396, Cys-409–Cys-431, Cys-418–Cys-444, Cys-432–Cys-447, and Cys-433–Cys-459. The 53-residue stretch at 407–459 folds into the TB 2 domain; sequence GPCFRVLRDGGCSLPILRNITKQICCCSRVGKAWGRGCQLCPPFGSEGFREIC. A glycan (N-linked (GlcNAc...) asparagine) is linked at Asn-425. The segment at 474 to 546 is disordered; the sequence is YNTRPLGQEP…PEIPESGPSS (73 aa). Residues 487–500 are compositionally biased toward polar residues; the sequence is SLSQPRTLPATSRP. Residues 508–522 are compositionally biased toward basic and acidic residues; it reads HRLEPRPEPRPDPRP. The region spanning 545 to 586 is the EGF-like 3 domain; sequence SSGMCQRNPQVCGPGRCISRPSGYTCACDSGFRLSPQGTRCI. 30 disulfides stabilise this stretch: Cys-549-Cys-561, Cys-556-Cys-570, Cys-572-Cys-585, Cys-591-Cys-603, Cys-598-Cys-612, Cys-614-Cys-627, Cys-633-Cys-645, Cys-640-Cys-654, Cys-656-Cys-669, Cys-675-Cys-687, Cys-682-Cys-696, Cys-698-Cys-707, Cys-714-Cys-726, Cys-721-Cys-735, Cys-737-Cys-750, Cys-756-Cys-768, Cys-763-Cys-777, Cys-779-Cys-792, Cys-838-Cys-851, Cys-845-Cys-860, Cys-862-Cys-876, Cys-882-Cys-894, Cys-888-Cys-903, Cys-905-Cys-918, Cys-924-Cys-935, Cys-930-Cys-944, Cys-946-Cys-959, Cys-1053-Cys-1065, Cys-1059-Cys-1074, and Cys-1076-Cys-1089. The region spanning 587 to 628 is the EGF-like 4; calcium-binding domain; the sequence is DVDECRRVPPPCAPGRCENSPGSFRCVCGPGFRAGPRAAECL. An EGF-like 5; calcium-binding domain is found at 629–670; it reads DVDECHRVPPPCDLGRCENTPGSFLCVCPAGYQAAPHGASCQ. One can recognise an EGF-like 6; calcium-binding domain in the interval 671-708; that stretch reads DVDECTQSPGLCGRGACKNLPGSFRCVCPAGFRGSACE. Residues 710-751 form the EGF-like 7; calcium-binding domain; the sequence is DVDECAQEPPPCGPGRCDNTAGSFHCACPAGFRSRGPGAPCQ. The 42-residue stretch at 752-793 folds into the EGF-like 8; calcium-binding domain; that stretch reads DVDECARSPPPCTYGRCENTEGSFQCVCPMGFQPNTAGSECE. In terms of domain architecture, EGF-like 9; calcium-binding spans 834 to 877; sequence DVDECSSGAPPCGPHGHCTNTEGSFRCSCAPGYRAPSGRPGPCA. The EGF-like 10; calcium-binding domain occupies 878 to 919; sequence DVNECLEGDFCFPHGECLNTDGSFACTCAPGYRPGPRGASCL. In terms of domain architecture, EGF-like 11; calcium-binding spans 920-960; it reads DVDECSEEDLCQSGICTNTDGSFECICPPGHRAGPDLASCL. An EGF-like 12; calcium-binding domain is found at 1049–1090; sequence DVDECRNRSFCGAHAVCQNLPGSFQCLCDQGYEGARDGRHCV. The N-linked (GlcNAc...) asparagine glycan is linked to Asn-1055. The tract at residues 1130–1179 is disordered; the sequence is GRCVPPRTSAGTFPGSQPQAPASPVLPARPPPPPLPRRPSTPRQGPVGSG. The span at 1138–1149 shows a compositional bias: polar residues; sequence SAGTFPGSQPQA. Positions 1156 to 1168 are enriched in pro residues; that stretch reads PARPPPPPLPRRP. The TB 3 domain occupies 1181–1235; it reads RECYFDTAAPDACDNILARNVTWQECCCTVGEGWGSGCRIQQCPGTETAEYQSLC. 10 disulfides stabilise this stretch: Cys-1183–Cys-1206, Cys-1193–Cys-1218, Cys-1207–Cys-1223, Cys-1208–Cys-1235, Cys-1257–Cys-1270, Cys-1265–Cys-1279, Cys-1281–Cys-1294, Cys-1300–Cys-1312, Cys-1307–Cys-1321, and Cys-1323–Cys-1336. Asn-1200 carries N-linked (GlcNAc...) asparagine glycosylation. Residues 1253-1295 form the EGF-like 13; calcium-binding domain; the sequence is DVDECQLFRDQVCKSGVCVNTAPGYSCYCSNGYYYHTQRLECI. Positions 1296–1337 constitute an EGF-like 14; calcium-binding domain; that stretch reads DNDECADEEPACEGGRCVNTVGSYHCTCEPPLVLDGSQRRCV. N-linked (GlcNAc...) asparagine glycosylation occurs at Asn-1339. The TB 4 domain occupies 1349–1402; sequence GVCWQEVGADLVCSHPRLDRQATYTECCCLYGEAWGMDCALCPAQDSDDFEALC. 4 cysteine pairs are disulfide-bonded: Cys-1351/Cys-1375, Cys-1361/Cys-1387, Cys-1376/Cys-1390, and Cys-1377/Cys-1402. The segment covering 1446–1458 has biased composition (pro residues); it reads ALPYDPYPPPPGP. The segment at 1446-1524 is disordered; the sequence is ALPYDPYPPP…PPEGGSYAGS (79 aa). Basic and acidic residues predominate over residues 1501–1510; the sequence is RSRDTRRSFP. 2 EGF-like domains span residues 1533–1573 and 1574–1618; these read EAEE…MACV and DINE…HHCA. 6 disulfides stabilise this stretch: Cys-1537–Cys-1548, Cys-1543–Cys-1557, Cys-1559–Cys-1572, Cys-1578–Cys-1593, Cys-1588–Cys-1602, and Cys-1604–Cys-1617.

It belongs to the LTBP family. Forms part of the large latent transforming growth factor beta precursor complex; removal is essential for activation of complex. Interacts with LTBP1 and TGFB1. Interacts with EFEMP2; this interaction promotes fibrillar deposition of EFEMP2. Contains hydroxylated asparagine residues. In terms of tissue distribution, highly expressed in heart, skeletal muscle, pancreas, uterus, and small intestine. Weakly expressed in placenta and lung.

Its subcellular location is the secreted. It is found in the extracellular space. It localises to the extracellular matrix. Key regulator of transforming growth factor beta (TGFB1, TGFB2 and TGFB3) that controls TGF-beta activation by maintaining it in a latent state during storage in extracellular space. Associates specifically via disulfide bonds with the Latency-associated peptide (LAP), which is the regulatory chain of TGF-beta, and regulates integrin-dependent activation of TGF-beta. This is Latent-transforming growth factor beta-binding protein 4 (LTBP4) from Homo sapiens (Human).